The chain runs to 368 residues: uncharacterized protein (368 aa).

The protein belongs to the CdaR family.

This is an uncharacterized protein from Bacillus subtilis (strain 168).